Reading from the N-terminus, the 122-residue chain is MPPKVSSKGAKKAGKAKAARSGDKKRKRRRKESYSIYIYKVLKQVHPDTGVSSKAMSIMNSFVNDIFERIAAEASRLAHYNKRSTITSREIQTAVRLLLPGELAKHAVSEGTKAVTKYTSSK.

Residues 1–31 (MPPKVSSKGAKKAGKAKAARSGDKKRKRRRK) are disordered. Basic residues predominate over residues 9 to 31 (GAKKAGKAKAARSGDKKRKRRRK). The O-linked (GlcNAc) serine glycan is linked to S109. A Glycyl lysine isopeptide (Lys-Gly) (interchain with G-Cter in ubiquitin) cross-link involves residue K117.

The protein belongs to the histone H2B family. As to quaternary structure, the nucleosome is a histone octamer containing two molecules each of H2A, H2B, H3 and H4 assembled in one H3-H4 heterotetramer and two H2A-H2B heterodimers. The octamer wraps approximately 147 bp of DNA. Monoubiquitination of Lys-117 gives a specific tag for epigenetic transcriptional activation and is also prerequisite for histone H3 'Lys-4' and 'Lys-79' methylation. In terms of processing, glcNAcylation at Ser-109 promotes monoubiquitination of Lys-117. It fluctuates in response to extracellular glucose, and associates with transcribed genes.

Its subcellular location is the nucleus. It localises to the chromosome. Functionally, core component of nucleosome. Nucleosomes wrap and compact DNA into chromatin, limiting DNA accessibility to the cellular machineries which require DNA as a template. Histones thereby play a central role in transcription regulation, DNA repair, DNA replication and chromosomal stability. DNA accessibility is regulated via a complex set of post-translational modifications of histones, also called histone code, and nucleosome remodeling. This Patella granatina (Sandpaper limpet) protein is Histone H2B, gonadal.